The primary structure comprises 87 residues: Protein Tat (87 aa).

The disordered stretch occupies residues 1-21 (MDPVDPNLEPWNHPGSQPRTP). Residues 1–24 (MDPVDPNLEPWNHPGSQPRTPCNK) form an interaction with human CREBBP region. A transactivation region spans residues 1–48 (MDPVDPNLEPWNHPGSQPRTPCNKCYCKKCCYHCQMCFITKGLGISYG). Positions 22, 25, and 27 each coordinate Zn(2+). Residues 22 to 37 (CNKCYCKKCCYHCQMC) form a cysteine-rich region. Position 28 is an N6-acetyllysine; by host PCAF (K28). The Zn(2+) site is built by C30, H33, C34, and C37. The segment at 38–48 (FITKGLGISYG) is core. Residues 45 to 87 (ISYGRKKRRQRRRPPQGNQAHQDPLPEQPSSQHRGDHPTGPKE) are disordered. Positions 48–58 (GRKKRRQRRRP) are enriched in basic residues. The short motif at 49 to 57 (RKKRRQRRR) is the Nuclear localization signal, RNA-binding (TAR), and protein transduction element. Residues 49 to 87 (RKKRRQRRRPPQGNQAHQDPLPEQPSSQHRGDHPTGPKE) form an interaction with the host capping enzyme RNGTT region. 2 positions are modified to N6-acetyllysine; by host EP300 and GCN5L2: K50 and K51. R52 and R53 each carry asymmetric dimethylarginine; by host PRMT6. Basic and acidic residues predominate over residues 77-87 (HRGDHPTGPKE). The Cell attachment site motif lies at 78-80 (RGD).

Belongs to the lentiviruses Tat family. Interacts with host CCNT1. Associates with the P-TEFb complex composed at least of Tat, P-TEFb (CDK9 and CCNT1), TAR RNA, RNA Pol II. Recruits the HATs CREBBP, TAF1/TFIID, EP300, PCAF and GCN5L2. Interacts with host KAT5/Tip60; this interaction targets the latter to degradation. Interacts with the host deacetylase SIRT1. Interacts with host capping enzyme RNGTT; this interaction stimulates RNGTT. Binds to host KDR, and to the host integrins ITGAV/ITGB3 and ITGA5/ITGB1. Interacts with host KPNB1/importin beta-1 without previous binding to KPNA1/importin alpha-1. Interacts with EIF2AK2. Interacts with host nucleosome assembly protein NAP1L1; this interaction may be required for the transport of Tat within the nucleus, since the two proteins interact at the nuclear rim. Interacts with host C1QBP/SF2P32; this interaction involves lysine-acetylated Tat. Interacts with the host chemokine receptors CCR2, CCR3 and CXCR4. Interacts with host DPP4/CD26; this interaction may trigger an anti-proliferative effect. Interacts with host LDLR. Interacts with the host extracellular matrix metalloproteinase MMP1. Interacts with host PRMT6; this interaction mediates Tat's methylation. Interacts with, and is ubiquitinated by MDM2/Hdm2. Interacts with host PSMC3 and HTATIP2. Interacts with STAB1; this interaction may overcome SATB1-mediated repression of IL2 and IL2RA (interleukin) in T cells by binding to the same domain than HDAC1. Interacts (when acetylated) with human CDK13, thereby increasing HIV-1 mRNA splicing and promoting the production of the doubly spliced HIV-1 protein Nef. Interacts with host TBP; this interaction modulates the activity of transcriptional pre-initiation complex. Interacts with host RELA. Interacts with host PLSCR1; this interaction negatively regulates Tat transactivation activity by altering its subcellular distribution. Asymmetrical arginine methylation by host PRMT6 seems to diminish the transactivation capacity of Tat and affects the interaction with host CCNT1. Post-translationally, acetylation by EP300, CREBBP, GCN5L2/GCN5 and PCAF regulates the transactivation activity of Tat. EP300-mediated acetylation of Lys-50 promotes dissociation of Tat from the TAR RNA through the competitive binding to PCAF's bromodomain. In addition, the non-acetylated Tat's N-terminus can also interact with PCAF. PCAF-mediated acetylation of Lys-28 enhances Tat's binding to CCNT1. Lys-50 is deacetylated by SIRT1. In terms of processing, polyubiquitination by host MDM2 does not target Tat to degradation, but activates its transactivation function and fosters interaction with CCNT1 and TAR RNA. Phosphorylated by EIF2AK2 on serine and threonine residues adjacent to the basic region important for TAR RNA binding and function. Phosphorylation of Tat by EIF2AK2 is dependent on the prior activation of EIF2AK2 by dsRNA.

It is found in the host nucleus. The protein localises to the host nucleolus. The protein resides in the host cytoplasm. It localises to the secreted. Transcriptional activator that increases RNA Pol II processivity, thereby increasing the level of full-length viral transcripts. Recognizes a hairpin structure at the 5'-LTR of the nascent viral mRNAs referred to as the transactivation responsive RNA element (TAR) and recruits the cyclin T1-CDK9 complex (P-TEFb complex) that will in turn hyperphosphorylate the RNA polymerase II to allow efficient elongation. The CDK9 component of P-TEFb and other Tat-activated kinases hyperphosphorylate the C-terminus of RNA Pol II that becomes stabilized and much more processive. Other factors such as HTATSF1/Tat-SF1, SUPT5H/SPT5, and HTATIP2 are also important for Tat's function. Besides its effect on RNA Pol II processivity, Tat induces chromatin remodeling of proviral genes by recruiting the histone acetyltransferases (HATs) CREBBP, EP300 and PCAF to the chromatin. This also contributes to the increase in proviral transcription rate, especially when the provirus integrates in transcriptionally silent region of the host genome. To ensure maximal activation of the LTR, Tat mediates nuclear translocation of NF-kappa-B by interacting with host RELA. Through its interaction with host TBP, Tat may also modulate transcription initiation. Tat can reactivate a latently infected cell by penetrating in it and transactivating its LTR promoter. In the cytoplasm, Tat is thought to act as a translational activator of HIV-1 mRNAs. Functionally, extracellular circulating Tat can be endocytosed by surrounding uninfected cells via the binding to several surface receptors such as CD26, CXCR4, heparan sulfate proteoglycans (HSPG) or LDLR. Neurons are rarely infected, but they internalize Tat via their LDLR. Through its interaction with nuclear HATs, Tat is potentially able to control the acetylation-dependent cellular gene expression. Modulates the expression of many cellular genes involved in cell survival, proliferation or in coding for cytokines or cytokine receptors. Tat plays a role in T-cell and neurons apoptosis. Tat induced neurotoxicity and apoptosis probably contribute to neuroAIDS. Circulating Tat also acts as a chemokine-like and/or growth factor-like molecule that binds to specific receptors on the surface of the cells, affecting many cellular pathways. In the vascular system, Tat binds to ITGAV/ITGB3 and ITGA5/ITGB1 integrins dimers at the surface of endothelial cells and competes with bFGF for heparin-binding sites, leading to an excess of soluble bFGF. This chain is Protein Tat, found in Homo sapiens (Human).